Consider the following 61-residue polypeptide: Small ribosomal subunit protein uS14 (61 aa).

Positions 24, 27, 40, and 43 each coordinate Zn(2+).

The protein belongs to the universal ribosomal protein uS14 family. Zinc-binding uS14 subfamily. In terms of assembly, part of the 30S ribosomal subunit. Contacts proteins S3 and S10. Zn(2+) is required as a cofactor.

In terms of biological role, binds 16S rRNA, required for the assembly of 30S particles and may also be responsible for determining the conformation of the 16S rRNA at the A site. This Herpetosiphon aurantiacus (strain ATCC 23779 / DSM 785 / 114-95) protein is Small ribosomal subunit protein uS14.